A 472-amino-acid chain; its full sequence is Protein c-ets-2-A (472 aa).

The 86-residue stretch at 85 to 170 (NTFNGFAKKR…EHLEEMMKEH (86 aa)) folds into the PNT domain. The segment at residues 366–446 (IQLWQFLLEL…SGKRYVYRFV (81 aa)) is a DNA-binding region (ETS).

Belongs to the ETS family.

Its subcellular location is the nucleus. Functionally, probable transcription factor. In Xenopus laevis (African clawed frog), this protein is Protein c-ets-2-A (ets2-a).